The primary structure comprises 1210 residues: ATPase family AAA domain-containing protein At1g05910 (1210 aa).

Polar residues predominate over residues 1 to 11 (MHPKRSSQGDG). Disordered regions lie at residues 1–32 (MHPKRSSQGDGSVTKPVRTSDRLRRRPKLHGR) and 63–291 (LHKG…RTDD). Acidic residues predominate over residues 97–109 (DYTDSSGAEDEDM). The segment covering 130 to 146 (SRKDMDAELAPRREGLR) has biased composition (basic and acidic residues). Residues 167–226 (DTSEEKDGQDETENGNELDDADDGENEVEAEDEGNGEDEGDGEDEGEEDGDDDEEGDEEQ) are compositionally biased toward acidic residues. Positions 227–244 (EGRKRYDLRNRAEVRRMP) are enriched in basic and acidic residues. Over residues 276-286 (GGSRPHKRHRF) the composition is skewed to basic residues. 422–429 (GPPGTGKT) is a binding site for ATP. The tract at residues 856–883 (LNGKPDGPQPLPELPKVPKEPTGPKPAE) is disordered. The region spanning 897–1000 (RLRMCLRDVC…DVVHGMLSQM (104 aa)) is the Bromo domain. Basic and acidic residues predominate over residues 1057–1070 (DRDYEGLKKPKKTT). The disordered stretch occupies residues 1057–1151 (DRDYEGLKKP…EISSRTESVK (95 aa)). A compositionally biased stretch (polar residues) spans 1080-1090 (DKSQNQDSGQE). Basic and acidic residues-rich tracts occupy residues 1108–1123 (DGDREDQSEPPSKEAS) and 1138–1151 (KSDKEISSRTESVK).

It belongs to the AAA ATPase family.

The protein is ATPase family AAA domain-containing protein At1g05910 of Arabidopsis thaliana (Mouse-ear cress).